A 158-amino-acid polypeptide reads, in one-letter code: MALITTGRGMIRDLEKSGSLAVYPPLEGGFEGRYQRRLRASGYVSESITARGLGDLAMYLTGVHGVRPPHLGKKTVGNGPAVGYVYYVPPIVNYKLEHLPPKAKGLVLWIMEGQILSSQEIEYLTVLPKSEPRVKVIVEMGGDRFFRWTPLQNTLVPA.

It belongs to the complex I NdhN subunit family. As to quaternary structure, NDH-1 can be composed of about 15 different subunits; different subcomplexes with different compositions have been identified which probably have different functions.

Its subcellular location is the cellular thylakoid membrane. The catalysed reaction is a plastoquinone + NADH + (n+1) H(+)(in) = a plastoquinol + NAD(+) + n H(+)(out). It carries out the reaction a plastoquinone + NADPH + (n+1) H(+)(in) = a plastoquinol + NADP(+) + n H(+)(out). Functionally, NDH-1 shuttles electrons from an unknown electron donor, via FMN and iron-sulfur (Fe-S) centers, to quinones in the respiratory and/or the photosynthetic chain. The immediate electron acceptor for the enzyme in this species is believed to be plastoquinone. Couples the redox reaction to proton translocation, and thus conserves the redox energy in a proton gradient. Cyanobacterial NDH-1 also plays a role in inorganic carbon-concentration. This Trichodesmium erythraeum (strain IMS101) protein is NAD(P)H-quinone oxidoreductase subunit N.